Here is a 683-residue protein sequence, read N- to C-terminus: Leucine zipper putative tumor suppressor 2 homolog (683 aa).

3 disordered regions span residues 1-37 (MAALQALPLSIDQNAEVSGSQSHTNTRSPVTENTMGS), 82-107 (YSSQDPLFNGLPTKKPSTTTSGNNGN), and 262-320 (MGHI…CDRS). 2 stretches are compositionally biased toward polar residues: residues 11–37 (IDQNAEVSGSQSHTNTRSPVTENTMGS) and 96–107 (KPSTTTSGNNGN). Positions 290–308 (SDSGRSSSSKSTGSLSGRG) are enriched in low complexity. Residues 324–665 (SDEILIRELE…LELEARELDE (342 aa)) are a coiled coil.

It belongs to the LZTS2 family.

It is found in the cytoplasm. Its subcellular location is the cytoskeleton. It localises to the microtubule organizing center. The protein localises to the centrosome. In terms of biological role, negative regulator of katanin-mediated microtubule severing and release from the centrosome. Required for central spindle formation and the completion of cytokinesis. Negative regulator of the Wnt signaling pathway. Represses beta-catenin-mediated transcriptional activation by promoting the nuclear exclusion of beta-catenin. This is Leucine zipper putative tumor suppressor 2 homolog (lzts2) from Xenopus tropicalis (Western clawed frog).